A 304-amino-acid chain; its full sequence is Probable 5-dehydro-4-deoxyglucarate dehydratase (304 aa).

Belongs to the DapA family.

The enzyme catalyses 5-dehydro-4-deoxy-D-glucarate + H(+) = 2,5-dioxopentanoate + CO2 + H2O. It functions in the pathway carbohydrate acid metabolism; D-glucarate degradation; 2,5-dioxopentanoate from D-glucarate: step 2/2. This chain is Probable 5-dehydro-4-deoxyglucarate dehydratase, found in Rhodococcus opacus (strain B4).